Reading from the N-terminus, the 874-residue chain is Alanine--tRNA ligase (874 aa).

Residues His-562, His-566, Cys-664, and His-668 each contribute to the Zn(2+) site.

The protein belongs to the class-II aminoacyl-tRNA synthetase family. Requires Zn(2+) as cofactor.

The protein resides in the cytoplasm. It catalyses the reaction tRNA(Ala) + L-alanine + ATP = L-alanyl-tRNA(Ala) + AMP + diphosphate. Its function is as follows. Catalyzes the attachment of alanine to tRNA(Ala) in a two-step reaction: alanine is first activated by ATP to form Ala-AMP and then transferred to the acceptor end of tRNA(Ala). Also edits incorrectly charged Ser-tRNA(Ala) and Gly-tRNA(Ala) via its editing domain. The chain is Alanine--tRNA ligase from Neisseria meningitidis serogroup B (strain ATCC BAA-335 / MC58).